A 114-amino-acid polypeptide reads, in one-letter code: MITVYGIKNCDTVKKALKWLADHNIEHKLHDYRVDGLDLNFLTQAETQFGWDVLVNKRSTTWRNLDEQVKNSLDKTTALSVLAENPTLIKRPIILQDGKALIGFNEKEYQAAFA.

The active site involves Cys10.

This sequence belongs to the ArsC family.

This is an uncharacterized protein from Haemophilus influenzae (strain ATCC 51907 / DSM 11121 / KW20 / Rd).